We begin with the raw amino-acid sequence, 88 residues long: Acyl-CoA-binding domain-containing protein 7 (88 aa).

The region spanning 3–88 (LQADFDKAAK…AKELIEKYGI (86 aa)) is the ACB domain. Residues R15, 30-34 (YGLYK), K56, and Y75 contribute to the an acyl-CoA site.

This sequence belongs to the ACBD7 family.

Functionally, binds medium- and long-chain acyl-CoA esters. The chain is Acyl-CoA-binding domain-containing protein 7 (ACBD7) from Bos taurus (Bovine).